Here is a 146-residue protein sequence, read N- to C-terminus: Microsomal glutathione S-transferase 2 (146 aa).

A run of 3 helical transmembrane segments spans residues 6–26 (ILLA…AMQV), 59–79 (FYPI…QVFA), and 111–131 (SLGV…NSFL).

The protein belongs to the MAPEG family. As to quaternary structure, homotrimer.

The protein localises to the endoplasmic reticulum membrane. It is found in the microsome membrane. The enzyme catalyses RX + glutathione = an S-substituted glutathione + a halide anion + H(+). The catalysed reaction is 1-chloro-2,4-dinitrobenzene + glutathione = 2,4-dinitrophenyl-S-glutathione + chloride + H(+). It carries out the reaction leukotriene C4 = leukotriene A4 + glutathione. It catalyses the reaction (5S)-hydroperoxy-(6E,8Z,11Z,14Z)-eicosatetraenoate + 2 glutathione = (5S)-hydroxy-(6E,8Z,11Z,14Z)-eicosatetraenoate + glutathione disulfide + H2O. With respect to regulation, each monomer binds on GSH molecule but only one subunit is catalytically active. In terms of biological role, catalyzes several different glutathione-dependent reactions. Catalyzes the glutathione-dependent reduction of lipid hydroperoxides, such as 5-HPETE. Has glutathione transferase activity, toward xenobiotic electrophiles, such as 1-chloro-2, 4-dinitrobenzene (CDNB). Also catalyzes the conjugation of leukotriene A4 with reduced glutathione to form leukotriene C4 (LTC4). Involved in oxidative DNA damage induced by ER stress and anticancer agents by activating LTC4 biosynthetic machinery in nonimmune cells. The chain is Microsomal glutathione S-transferase 2 (MGST2) from Bos taurus (Bovine).